The chain runs to 146 residues: MSVIVAKINLLMEAGKAVPGPKIASVLGPRGIPVPKFCEAFNKVTSAANANYKVGDLVTVRISIKDDRSHDFTVSGPPVAYLLKQEAKLSKSSGNPGKELVAKLPMSAIIKVAKCKMVDMKVDNEDSAVKMVVGTAKSMGIEVVEG.

The protein belongs to the universal ribosomal protein uL11 family. In terms of assembly, part of the ribosomal stalk of the 50S ribosomal subunit. Interacts with L10 and the large rRNA to form the base of the stalk. L10 forms an elongated spine to which L12 dimers bind in a sequential fashion forming a multimeric L10(L12)X complex. Post-translationally, one or more lysine residues are methylated.

Its function is as follows. Forms part of the ribosomal stalk which helps the ribosome interact with GTP-bound translation factors. The protein is Large ribosomal subunit protein uL11 of Wolbachia pipientis wMel.